Consider the following 133-residue polypeptide: uncharacterized protein (133 aa).

It to E.coli ydcQ.

This is an uncharacterized protein from Haemophilus phage HP1 (strain HP1c1) (Bacteriophage HP1).